The sequence spans 388 residues: Succinate--CoA ligase [ADP-forming] subunit beta (388 aa).

The region spanning 9–245 is the ATP-grasp domain; it reads KELLKSYGLP…KSQENERELK (237 aa). ATP-binding positions include K46, 53 to 55, E100, Y103, and E108; that span reads GRG. Mg(2+) contacts are provided by N200 and D214. Substrate contacts are provided by residues N265 and 322-324; that span reads GIV.

The protein belongs to the succinate/malate CoA ligase beta subunit family. Heterotetramer of two alpha and two beta subunits. The cofactor is Mg(2+).

It catalyses the reaction succinate + ATP + CoA = succinyl-CoA + ADP + phosphate. It carries out the reaction GTP + succinate + CoA = succinyl-CoA + GDP + phosphate. It functions in the pathway carbohydrate metabolism; tricarboxylic acid cycle; succinate from succinyl-CoA (ligase route): step 1/1. Its function is as follows. Succinyl-CoA synthetase functions in the citric acid cycle (TCA), coupling the hydrolysis of succinyl-CoA to the synthesis of either ATP or GTP and thus represents the only step of substrate-level phosphorylation in the TCA. The beta subunit provides nucleotide specificity of the enzyme and binds the substrate succinate, while the binding sites for coenzyme A and phosphate are found in the alpha subunit. This Psychrobacter cryohalolentis (strain ATCC BAA-1226 / DSM 17306 / VKM B-2378 / K5) protein is Succinate--CoA ligase [ADP-forming] subunit beta.